The following is a 300-amino-acid chain: Ribokinase (300 aa).

Residues 11-13, 39-43, and glutamate 139 each bind substrate; these read SMD and GKGAN. Residues asparagine 183 and 210-215 contribute to the ATP site; that span reads TLGSEG. 2 residues coordinate K(+): aspartate 236 and threonine 238. 241–242 lines the ATP pocket; sequence GD. Residue aspartate 242 participates in substrate binding. The active-site Proton acceptor is aspartate 242. 3 residues coordinate K(+): serine 272, lysine 275, and glycine 277.

This sequence belongs to the carbohydrate kinase PfkB family. Ribokinase subfamily. Homodimer. The cofactor is Mg(2+).

Its subcellular location is the cytoplasm. The catalysed reaction is D-ribose + ATP = D-ribose 5-phosphate + ADP + H(+). The protein operates within carbohydrate metabolism; D-ribose degradation; D-ribose 5-phosphate from beta-D-ribopyranose: step 2/2. Activated by a monovalent cation that binds near, but not in, the active site. The most likely occupant of the site in vivo is potassium. Ion binding induces a conformational change that may alter substrate affinity. In terms of biological role, catalyzes the phosphorylation of ribose at O-5 in a reaction requiring ATP and magnesium. The resulting D-ribose-5-phosphate can then be used either for sythesis of nucleotides, histidine, and tryptophan, or as a component of the pentose phosphate pathway. This is Ribokinase from Lactococcus lactis subsp. lactis (strain IL1403) (Streptococcus lactis).